The sequence spans 212 residues: Methylthioribulose-1-phosphate dehydratase (212 aa).

Zn(2+) contacts are provided by His-99 and His-101.

Belongs to the aldolase class II family. MtnB subfamily. In terms of assembly, homotetramer. Requires Zn(2+) as cofactor.

The enzyme catalyses 5-(methylsulfanyl)-D-ribulose 1-phosphate = 5-methylsulfanyl-2,3-dioxopentyl phosphate + H2O. It functions in the pathway amino-acid biosynthesis; L-methionine biosynthesis via salvage pathway; L-methionine from S-methyl-5-thio-alpha-D-ribose 1-phosphate: step 2/6. Its function is as follows. Catalyzes the dehydration of methylthioribulose-1-phosphate (MTRu-1-P) into 2,3-diketo-5-methylthiopentyl-1-phosphate (DK-MTP-1-P). The protein is Methylthioribulose-1-phosphate dehydratase of Bacillus pumilus (strain SAFR-032).